Reading from the N-terminus, the 334-residue chain is Cobalt-precorrin-5B C(1)-methyltransferase (334 aa).

Belongs to the CbiD family.

The catalysed reaction is Co-precorrin-5B + S-adenosyl-L-methionine = Co-precorrin-6A + S-adenosyl-L-homocysteine. It participates in cofactor biosynthesis; adenosylcobalamin biosynthesis; cob(II)yrinate a,c-diamide from sirohydrochlorin (anaerobic route): step 6/10. Its function is as follows. Catalyzes the methylation of C-1 in cobalt-precorrin-5B to form cobalt-precorrin-6A. The sequence is that of Cobalt-precorrin-5B C(1)-methyltransferase from Methanoregula boonei (strain DSM 21154 / JCM 14090 / 6A8).